The following is a 43-amino-acid chain: Protein PsbN (43 aa).

A helical membrane pass occupies residues 5-25; it reads TVLSIFISSLLLGITIYSIYI.

This sequence belongs to the PsbN family.

Its subcellular location is the plastid. It is found in the chloroplast thylakoid membrane. Functionally, may play a role in photosystem I and II biogenesis. The sequence is that of Protein PsbN from Gracilaria tenuistipitata var. liui (Red alga).